Consider the following 6781-residue polypeptide: Replicase polyprotein 1ab (6781 aa).

The region spanning 2-109 (ASNHVTLAFA…ELELTFGRRG (108 aa)) is the CoV Nsp1 globular domain. SsDNA-binding residues include Glu59, Asn95, Glu99, and Glu102. Residues 112–364 (IVPVDQYMCG…TKLKFDILSG (253 aa)) enclose the CoV Nsp2 N-terminal domain. In terms of domain architecture, CoV Nsp2 middle spans 383-776 (SALVDIVDDA…AEMYNTYLST (394 aa)). The CoV Nsp2 C-terminal domain maps to 778-895 (VENLVLAGVS…VPICFKKKGG (118 aa)). Residues 896–991 (GDVKFSDEVS…VMVSQWPLND (96 aa)) form the Ubiquitin-like 1 domain. The disordered stretch occupies residues 1009–1040 (IDSEGDEVDSSAPEKVADVANSEPGDDGLPVA). Residues 1057-1296 (SFIKDTPSTV…EPVVKPFYSY (240 aa)) form the Peptidase C16 1 domain. The active-site For PL1-PRO activity is Cys1091. Residues 1162-1193 (CGCGTGERIYEGCAFRMTPTLEPFPYGACAQC) form a C4-type 1; degenerate zinc finger. Residues His1239 and Asp1252 each act as for PL1-PRO activity in the active site. Residues 1297–1465 (KNVDFYQGDF…IFKEALVDTT (169 aa)) form the Macro domain. The 56-residue stretch at 1630–1685 (NKSVVIKVTEDTRSVKAVKVESTATYGQQIGPCLVNDTVVTDNKPVVADVVAKVVP) folds into the Ubiquitin-like 2 domain. The Peptidase C16 2 domain maps to 1691 to 1951 (SHYGFDKAGE…LLDTMNYASE (261 aa)). The active-site For PL2-PRO activity is the Cys1729. A C4-type 2; degenerate zinc finger spans residues 1808 to 1838 (DGCCCSKRVVTAPVVNASVLKLGVEDGLCPH). Catalysis depends on for PL2-PRO activity residues His1888 and Asp1901. The next 2 helical transmembrane spans lie at 1959–1979 (FMSR…GLCF) and 2022–2042 (WFKV…LLFM). Positions 1959–2170 (FMSRNLITVF…FGDEIVVFFI (212 aa)) are HD1. Residues 2038-2102 (ALLFMTIRFT…TQVVWQHLRD (65 aa)) enclose the 3Ecto domain. 2 disulfides stabilise this stretch: Cys2054-Cys2080 and Cys2072-Cys2077. The next 3 membrane-spanning stretches (helical) occupy residues 2105-2125 (IGNV…GVYV), 2127-2147 (AITL…LGLQ), and 2150-2170 (IWFL…VFFI). The interval 2176–2266 (MFIKHVCLGC…VVKLNVQPTG (91 aa)) is Y1. In terms of domain architecture, CoV Nsp3 Y spans 2176–2516 (MFIKHVCLGC…PTVCIANKKG (341 aa)). Zn(2+) is bound by residues His2180, Cys2185, Cys2190, Cys2193, Cys2226, His2229, Cys2233, and Cys2236. Positions 2180–2193 (HVCLGCDKASCVAC) are ZF1. The tract at residues 2226-2236 (CKKHNFFCLNC) is ZF2. Residues 2267-2356 (PATILIDKVE…LVDSALLASL (90 aa)) form a Y2 region. A coV-Y region spans residues 2267–2516 (PATILIDKVE…PTVCIANKKG (250 aa)). The segment at 2357-2414 (SVDFGASLHSAFVSVLSNSFGKDLSSCNDMQDCKSTLGFDDVPLDTFNAAVAEAHRYD) is Y3. Residues 2415 to 2516 (VLLTDMSFNN…PTVCIANKKG (102 aa)) are Y4. A run of 7 helical transmembrane segments spans residues 2528 to 2548 (FFWF…FLDF), 2619 to 2639 (IPAG…TIFG), 2654 to 2674 (GACI…TAVY), 2754 to 2774 (GSDF…ISVF), 2787 to 2807 (ILFN…FTKF), 2814 to 2834 (MSVG…SYIV), and 2863 to 2883 (LGFL…VYAF). The tract at residues 2528 to 2883 (FFWFLCLFIV…PWWVLMVYAF (356 aa)) is HD2. Residues 2902 to 2997 (LFEGDKFVGS…PTVSYNSTLQ (96 aa)) enclose the Nsp4C domain. One can recognise a Peptidase C30 domain in the interval 2998–3299 (AGLRKMAQPS…VRQMYGVNLQ (302 aa)). Catalysis depends on for 3CL-PRO activity residues His3038 and Cys3141. 7 helical membrane passes run 3336–3356 (GYVT…MFTL), 3361–3381 (LFFQ…NLAF), 3399–3419 (LMGF…VTIL), 3431–3451 (PASS…YFYA), 3454–3474 (ILSC…VGAV), 3476–3496 (YKVA…FGDI), and 3500–3520 (MFCY…LYWF). The HD3 stretch occupies residues 3336–3520 (GYVTPMFACL…CCFYGILYWF (185 aa)). The 83-residue stretch at 3580–3662 (SKLTDIKCSN…SYFNDNSMLQ (83 aa)) folds into the RdRp Nsp7 cofactor domain. Residues 3663–3857 (SVASTYVGLP…LGCERIVKLQ (195 aa)) enclose the RdRp Nsp8 cofactor domain. Residues 3858–3965 (NNEIIPGKLK…GYIGATVRLQ (108 aa)) enclose the Nsp9 ssRNA-binding domain. An ExoN/MTase coactivator domain is found at 3966–4103 (AGKQTEQAIN…CDRSIMQSTD (138 aa)). Zn(2+)-binding residues include Cys4039, Cys4042, His4048, Cys4055, Cys4081, Cys4084, Cys4092, and Cys4094. 2 zinc fingers span residues 4039–4055 (CLYC…DGFC) and 4081–4094 (CKVC…GCTC). In terms of domain architecture, NiRAN spans 4106–4355 (YLNRVRGSSA…ASECFVKSDI (250 aa)). The Nsp12 Interface domain maps to 4361 to 4459 (KSYDLLEYDF…WNNDLNLHSS (99 aa)). His4390, Cys4396, Cys4401, Cys4405, and Cys4582 together coordinate Zn(2+). Residues 4460–5027 (RLSINELLQF…NMYEKSAVLQ (568 aa)) enclose the Nsp12 RNA-dependent RNA polymerase domain. Positions 4462 to 4676 (SINELLQFCS…HQKHLKSIVN (215 aa)) are rdRp Fingers N-ter. The interval 4677–4715 (TRGASVVIGTTKFYGGWDNMLKNLIDGVENPCLMGWDYP) is rdRp Palm N-ter. The RdRp catalytic domain occupies 4707 to 4869 (PCLMGWDYPK…CYNNDYASLG (163 aa)). The segment at 4716–4774 (KCDRALPNMIRMISAMILGSKHTTCCSSTDRFFRLCNELAQVLTEVVYSNGGFYLKPGG) is rdRp Fingers C-ter. Zn(2+)-binding residues include His4737, Cys4740, and Cys4741. The tract at residues 4775 to 4910 (TTSGDATTAY…NKGPHEFCSQ (136 aa)) is rdRp Palm C-ter. Active-site for RNA-directed RNA polymerase activity residues include Ser4854, Asp4855, and Asp4856. The segment at 4911-5027 (HTMQIVDKEG…NMYEKSAVLQ (117 aa)) is rdRp Thumb. Residues 5028-5140 (SAGLCVVCGS…EDFNRIATSD (113 aa)) form the CV ZBD domain. Residues Cys5032, Cys5035, Cys5043, Cys5046, Cys5053, Cys5056, His5060, His5066, Cys5077, Cys5082, Cys5099, and His5102 each contribute to the Zn(2+) site. Residues 5275–5466 (STIHKLHPAF…MCALKPDVFL (192 aa)) enclose the (+)RNA virus helicase ATP-binding domain. ATP is bound at residue 5310–5317 (GPPGSGKS). The 170-residue stretch at 5467–5636 (HKCYRCPAEI…EGCGLFKDCS (170 aa)) folds into the (+)RNA virus helicase C-terminal domain. The 215-residue stretch at 5696–5910 (LFCTRDFAMR…RCLAIHDCFV (215 aa)) folds into the ExoN domain. Catalysis depends on for exoribonuclease activity residues Asp5714, Glu5716, and Glu5815. The Zn(2+) site is built by Cys5831, Cys5833, Cys5849, His5852, His5880, Cys5884, and His5887. Residues His5891 and Asp5896 each act as for exoribonuclease activity in the active site. Position 5902 (Cys5902) interacts with Zn(2+). One can recognise an N7-MTase domain in the interval 5919 to 6140 (YPFIGNEAVI…NLWQTFSNNL (222 aa)). 5954-5960 (DIGNPKG) contributes to the S-adenosyl-L-methionine binding site. Residues 6031 to 6045 (CNGGSLYVNNHAFHT) form a gpppA-binding region. Zn(2+) contacts are provided by Cys6069, Cys6086, Cys6097, and His6100. A Nsp15 N-terminal oligomerization domain is found at 6142-6202 (GLENIAFNVL…NVAFELYAKR (61 aa)). One can recognise an AV-Nsp11N/CoV-Nsp15M domain in the interval 6203–6320 (KVGLTPPITI…IYTRKNGKFE (118 aa)). The NendoU domain maps to 6337-6477 (SPRSDMEKDF…KDHKLQTFYP (141 aa)). Catalysis depends on for uridylate-specific endoribonuclease activity residues His6367, His6382, and Lys6423. The 297-residue stretch at 6481-6777 (ASEWKCGYSM…AICGFSNHLV (297 aa)) folds into the Nidovirus-type SAM-dependent 2'-O-MTase domain. Catalysis depends on for 2'-O-methyltransferase residues Lys6525, Asp6609, Lys6649, and Glu6682.

Belongs to the coronaviruses polyprotein 1ab family. In terms of assembly, interacts with PL-PRO and nsp6. Monomer. Homodimer; disulfide-linked. As to quaternary structure, interacts with nsp8 and nsp12 to form the replication-transcription complex (RTC): nsp12, nsp7, two subunits of nsp8, and up to two subunits of nsp13. Eight copies of nsp7 and eight copies of nsp8 assemble to form a heterohexadecamer dsRNA-encircling ring structure. In terms of assembly, interacts with nsp7, nsp13 and nsp12 to form the replication-transcription complex (RTC): nsp12, nsp7, two subunits of nsp8, and up to two subunits of nsp13. Eight copies of nsp7 and eight copies of nsp8 assemble to form a heterohexadecamer dsRNA-encircling ring structure. Homodimer. As to quaternary structure, forms a dodecamer and interacts with nsp14 and nsp16; these interactions enhance nsp14 and nsp16 enzymatic activities. Requires Mn(2+) as cofactor. Specific enzymatic cleavages in vivo by its own proteases yield mature proteins. 3CL-PRO and PL-PRO proteinases are autocatalytically processed.

It is found in the host cytoplasm. The protein localises to the host nucleus. Its subcellular location is the host membrane. It localises to the host perinuclear region. The protein resides in the host endoplasmic reticulum. It is found in the host endoplasmic reticulum-Golgi intermediate compartment. The catalysed reaction is Thiol-dependent hydrolysis of ester, thioester, amide, peptide and isopeptide bonds formed by the C-terminal Gly of ubiquitin (a 76-residue protein attached to proteins as an intracellular targeting signal).. It catalyses the reaction a 5'-end diphospho-ribonucleoside in mRNA + GTP + H(+) = a 5'-end (5'-triphosphoguanosine)-ribonucleoside in mRNA + diphosphate. It carries out the reaction RNA(n) + a ribonucleoside 5'-triphosphate = RNA(n+1) + diphosphate. The enzyme catalyses ATP + H2O = ADP + phosphate + H(+). The catalysed reaction is a 5'-end (5'-triphosphoguanosine)-ribonucleoside in mRNA + S-adenosyl-L-methionine = a 5'-end (N(7)-methyl 5'-triphosphoguanosine)-ribonucleoside in mRNA + S-adenosyl-L-homocysteine. It catalyses the reaction uridylyl-uridylyl-ribonucleotide-RNA = a 3'-end uridylyl-2',3'-cyclophospho-uridine-RNA + a 5'-end dephospho-ribonucleoside-RNA. It carries out the reaction a 5'-end (N(7)-methyl 5'-triphosphoguanosine)-ribonucleoside in mRNA + S-adenosyl-L-methionine = a 5'-end (N(7)-methyl 5'-triphosphoguanosine)-(2'-O-methyl-ribonucleoside) in mRNA + S-adenosyl-L-homocysteine + H(+). With respect to regulation, inhibited by the substrate-analog Cbz-Val-Asn-Ser-Thr-Leu-Gln-CMK. Inhibited by (R)-16. Its function is as follows. Multifunctional protein responsible for the transcription of negative stranded RNA, leader RNA, subgenomic mRNAs and progeny virion RNA as well as proteinases responsible for the cleavage of the polyprotein into functional products. Functionally, plays a role in the inhibition of host interferon and pro-inflammatory cytokines production. Suppresses host RELA/p65 activation by blocking NFKBIA phosphorylation. Targets also the RLR pathway downstream of the IRF3 activation by targeting host CREBBP to proteasomal degradation. Responsible for the cleavages located at the N-terminus of the replicase polyprotein. Participates together with nsp4 in the assembly of virally-induced cytoplasmic double-membrane vesicles necessary for viral replication. Forms a molecular pore spanning the double membrane of the coronavirus replication organelle. In addition, PLP2 possesses a deubiquitinating/deISGylating activity and processes both 'Lys-48'- and 'Lys-63'-linked polyubiquitin chains from cellular substrates. PLP2 also antagonizes innate immune induction of type I interferon by blocking the nuclear translocation of host IRF-3. Participates in the inhibition of the integrated stress response (ISR) in the infected host cell. In terms of biological role, participates in the assembly of virally-induced cytoplasmic double-membrane vesicles necessary for viral replication. Its function is as follows. Responsible for the majority of cleavages as it cleaves the C-terminus of replicase polyprotein at 11 sites. Recognizes substrates containing the core sequence [ILMVF]-Q-|-[SGACN]. Also contains an ADP-ribose-1''-phosphate (ADRP)-binding function. Participates in the inhibition of the integrated stress response (ISR) in the infected host cell. Functionally, plays a role in the initial induction of autophagosomes from host endoplasmic reticulum. Later, limits the expansion of these phagosomes that are no longer able to deliver viral components to lysosomes. Plays a role in viral RNA synthesis. Forms a hexadecamer with nsp8 (8 subunits of each) that may participate in viral replication by acting as a primase. Alternatively, may synthesize substantially longer products than oligonucleotide primers. In terms of biological role, plays a role in viral RNA synthesis. Forms a hexadecamer with nsp7 (8 subunits of each) that may participate in viral replication by acting as a primase. Alternatively, may synthesize substantially longer products than oligonucleotide primers. Its function is as follows. Forms a primer, NSP9-pU, which is utilized by the polymerase for the initiation of RNA chains. Interacts with ribosome signal recognition particle RNA (SRP). Together with NSP8, suppress protein integration into the cell membrane, thereby disrupting host immune defenses. Functionally, plays a pivotal role in viral transcription by stimulating both nsp14 3'-5' exoribonuclease and nsp16 2'-O-methyltransferase activities. Therefore plays an essential role in viral mRNAs cap methylation. RNA-directed RNA polymerase that catalyzes the transcription of viral genomic and subgenomic RNAs. Acts in complex with nsp7 and nsp8 to transcribe both the minus and positive strands of genomic RNA. The kinase-like NiRAN domain of NSP12 attaches one or more nucleotides to the amino terminus of NSP9, forming a covalent RNA-protein intermediate that serves as transcription/replication primer. Subgenomic RNAs (sgRNAs) are formed by discontinuous transcription: The polymerase has the ability to pause at transcription-regulating sequences (TRS) and jump to the leader TRS, resulting in a major deletion. This creates a series of subgenomic RNAs that are replicated, transcribed and translated. In addition, Nsp12 is a subunit of the viral RNA capping enzyme that catalyzes the RNA guanylyltransferase reaction for genomic and sub-genomic RNAs. Subsequently, the NiRAN domain transfers RNA to GDP, and forms the core cap structure GpppA-RNA. In terms of biological role, plays a role in viral RNA synthesis. Multi-functional protein with a zinc-binding domain in N-terminus displaying RNA and DNA duplex-unwinding activities with 5' to 3' polarity. ATPase activity is strongly stimulated by poly(U), poly(dT), poly(C), poly(dA), but not by poly(G). Its function is as follows. Plays a role in viral RNA synthesis through two distinct activities. The N7-guanine methyltransferase activity plays a role in the formation of the cap structure GpppA-RNA. The proofreading exoribonuclease reduces the sensitivity of the virus to RNA mutagens during replication. This activity acts on both ssRNA and dsRNA in a 3'-5' direction. Functionally, plays a role in viral transcription/replication and prevents the simultaneous activation of host cell dsRNA sensors, such as MDA5/IFIH1, OAS, and PKR. Acts by degrading the 5'-polyuridines generated during replication of the poly(A) region of viral genomic and subgenomic RNAs. Catalyzes a two-step reaction in which a 2'3'-cyclic phosphate (2'3'-cP) is first generated by 2'-O transesterification, which is then hydrolyzed to a 3'-phosphate (3'-P). If not degraded, poly(U) RNA would hybridize with poly(A) RNA tails and activate host dsRNA sensors. Decreases the RNA levels and thus the expression of host TBK1 and IRF3, antagonizing the host innate response. The sequence is that of Replicase polyprotein 1ab (rep) from Sus scrofa (Pig).